The chain runs to 242 residues: Glutamate transport ATP-binding protein GluA (242 aa).

One can recognise an ABC transporter domain in the interval 2 to 236 (IKMTGVQKFF…PQTDRAKDFL (235 aa)). 34–41 (GPSGSGKS) provides a ligand contact to ATP.

Belongs to the ABC transporter superfamily. As to quaternary structure, the complex is composed of two ATP-binding proteins (GluA), two transmembrane proteins (GluC and GluD) and a solute-binding protein (GluB).

Its subcellular location is the cell membrane. The catalysed reaction is a polar amino acid(out) + ATP + H2O = a polar amino acid(in) + ADP + phosphate + H(+). It catalyses the reaction L-glutamate(out) + ATP + H2O = L-glutamate(in) + ADP + phosphate + H(+). Its function is as follows. Part of the ABC transporter complex GluABCD involved in glutamate uptake. Probably responsible for energy coupling to the transport system. The polypeptide is Glutamate transport ATP-binding protein GluA (Corynebacterium efficiens (strain DSM 44549 / YS-314 / AJ 12310 / JCM 11189 / NBRC 100395)).